The chain runs to 246 residues: Protein-lysine N-methyltransferase EFM6 (246 aa).

Residues W51, 87-89, D115, W143, and A169 contribute to the S-adenosyl-L-methionine site; that span reads GSG.

This sequence belongs to the class I-like SAM-binding methyltransferase superfamily. METTL21 family. EFM6 subfamily.

Its subcellular location is the cytoplasm. Its function is as follows. S-adenosyl-L-methionine-dependent protein-lysine N-methyltransferase that methylates elongation factor 1-alpha (TEF1 and TEF2) at 'Lys-390'. This Saccharomyces cerevisiae (strain ATCC 204508 / S288c) (Baker's yeast) protein is Protein-lysine N-methyltransferase EFM6.